The following is a 98-amino-acid chain: NADH-ubiquinone oxidoreductase chain 4L (98 aa).

Helical transmembrane passes span 1 to 21, 30 to 50, and 61 to 81; these read MSPI…GLLI, LLCL…LALT, and IILL…LVMV.

This sequence belongs to the complex I subunit 4L family. As to quaternary structure, core subunit of respiratory chain NADH dehydrogenase (Complex I) which is composed of 45 different subunits.

Its subcellular location is the mitochondrion inner membrane. The catalysed reaction is a ubiquinone + NADH + 5 H(+)(in) = a ubiquinol + NAD(+) + 4 H(+)(out). Functionally, core subunit of the mitochondrial membrane respiratory chain NADH dehydrogenase (Complex I) which catalyzes electron transfer from NADH through the respiratory chain, using ubiquinone as an electron acceptor. Part of the enzyme membrane arm which is embedded in the lipid bilayer and involved in proton translocation. The polypeptide is NADH-ubiquinone oxidoreductase chain 4L (MT-ND4L) (Chrysochloris asiatica (Cape golden mole)).